Consider the following 659-residue polypeptide: QWRF motif-containing protein 2 (659 aa).

Disordered stretches follow at residues Met1–Val125, Ser157–Gly221, Asp291–Ser317, Arg340–Ile359, and Ser371–Asn429. Residues Ser42 to Ser72 show a composition bias toward low complexity. A compositionally biased stretch (polar residues) spans Arg90–Thr102. Basic and acidic residues predominate over residues Ser172–Lys190. 2 stretches are compositionally biased toward polar residues: residues Ser206–Arg216 and Asp291–Val303. Low complexity-rich tracts occupy residues Gly345–Ile359 and Ala401–Arg418. The short motif at Gln468 to Phe471 is the QWRF motif element.

Belongs to the QWRF family.

This Arabidopsis thaliana (Mouse-ear cress) protein is QWRF motif-containing protein 2 (QWRF2).